Here is a 134-residue protein sequence, read N- to C-terminus: Fluoride-specific ion channel FluC 2 (134 aa).

4 helical membrane passes run 8–28 (IVAIGIGGAIGTSFRFLLNTW), 40–60 (IENIVGSFLLGFLTSWFLVIV), 69–89 (LGVGLCGGFTTMSTLAADSVL), and 99–119 (LIYVAASLFGGIGFALLGYLL). The Na(+) site is built by Gly-75 and Thr-78.

This sequence belongs to the fluoride channel Fluc/FEX (TC 1.A.43) family.

It localises to the cell membrane. It catalyses the reaction fluoride(in) = fluoride(out). Na(+) is not transported, but it plays an essential structural role and its presence is essential for fluoride channel function. Fluoride-specific ion channel. Important for reducing fluoride concentration in the cell, thus reducing its toxicity. The protein is Fluoride-specific ion channel FluC 2 of Halalkalibacterium halodurans (strain ATCC BAA-125 / DSM 18197 / FERM 7344 / JCM 9153 / C-125) (Bacillus halodurans).